A 184-amino-acid chain; its full sequence is Photosystem I assembly protein Ycf4 (184 aa).

Transmembrane regions (helical) follow at residues 22 to 42 (FFWA…GTSS) and 57 to 77 (IIFF…LFIS).

It belongs to the Ycf4 family.

Its subcellular location is the plastid. It is found in the chloroplast thylakoid membrane. Its function is as follows. Seems to be required for the assembly of the photosystem I complex. The polypeptide is Photosystem I assembly protein Ycf4 (Aethionema cordifolium (Lebanon stonecress)).